A 216-amino-acid polypeptide reads, in one-letter code: GTP-binding nuclear protein Ran, testis-specific isoform (216 aa).

The residue at position 2 (A2) is an N-acetylalanine. In terms of domain architecture, Small GTPase Ran-type spans 7–171 (PQIQFKLVLV…FWLARKLIGD (165 aa)). 17–24 (GDGGTGKT) contacts GTP. Position 24 is a phosphothreonine (T24). The interval 37-45 (KEYVATLGV) is switch-I. K60 bears the N6-acetyllysine mark. 65-69 (DTAGQ) contributes to the GTP binding site. Positions 68–84 (GQEKFGGLRDGYYIQAQ) are switch-II. K71 bears the N6-acetyllysine; alternate mark. Residue K71 forms a Glycyl lysine isopeptide (Lys-Gly) (interchain with G-Cter in SUMO2); alternate linkage. K71 participates in a covalent cross-link: Glycyl lysine isopeptide (Lys-Gly) (interchain with G-Cter in ubiquitin); alternate. K99 carries the post-translational modification N6-acetyllysine. 122–125 (NKVD) contacts GTP. K134 is subject to N6-acetyllysine. A Glycyl lysine isopeptide (Lys-Gly) (interchain with G-Cter in SUMO2) cross-link involves residue K152. K159 bears the N6-acetyllysine; alternate mark. K159 bears the N6-succinyllysine; alternate mark.

The protein belongs to the small GTPase superfamily. Ran family. Testis specific.

Its subcellular location is the nucleus. The catalysed reaction is GTP + H2O = GDP + phosphate + H(+). Functionally, GTP-binding protein involved in nucleocytoplasmic transport. Required for the import of protein into the nucleus and also for RNA export. Involved in chromatin condensation and control of cell cycle. The chain is GTP-binding nuclear protein Ran, testis-specific isoform (Rasl2-9) from Rattus norvegicus (Rat).